The chain runs to 194 residues: Large ribosomal subunit protein uL22 (194 aa).

This sequence belongs to the universal ribosomal protein uL22 family.

This Aspergillus fumigatus (strain ATCC MYA-4609 / CBS 101355 / FGSC A1100 / Af293) (Neosartorya fumigata) protein is Large ribosomal subunit protein uL22 (rpl17).